Here is a 316-residue protein sequence, read N- to C-terminus: Taste receptor type 2 member 3 (316 aa).

Residues 1 to 7 lie on the Extracellular side of the membrane; that stretch reads MLGFTEG. A helical membrane pass occupies residues 8-28; that stretch reads IFLVLTVTEFILGNLVNGFIV. Residues 29–50 are Cytoplasmic-facing; sequence SVNGSHWFKSKKISLSDFIITS. Residues 51 to 71 form a helical membrane-spanning segment; sequence LALFRIFLLWIIFTDSLIIVF. The Extracellular portion of the chain corresponds to 72-86; the sequence is SYHTHDSGIRMQLID. Residues 87–107 traverse the membrane as a helical segment; sequence VFWTFTNHFSIWLISCLSVFY. Topologically, residues 108–128 are cytoplasmic; it reads CLKIATFSHPSFLWLKWRASR. Residues 129–149 traverse the membrane as a helical segment; the sequence is VVVGMLWGALVLSCVCTMSLM. Topologically, residues 150-186 are extracellular; sequence NEFKIYSALTGSRDTQNMTEYIRLKRHEYNLMHVLGN. Asn166 is a glycosylation site (N-linked (GlcNAc...) asparagine). A helical transmembrane segment spans residues 187–207; that stretch reads LWKIPSLIVSLIAYFLLLLSL. Residues 208–234 are Cytoplasmic-facing; that stretch reads GKHTQQMQKYSVGSRDQSAEAHRRAMR. Residues 235-255 form a helical membrane-spanning segment; sequence IILSFLLFFLFYFLSFVILSS. Residues 256–266 are Extracellular-facing; sequence SRFLPETKIAR. A helical membrane pass occupies residues 267 to 287; the sequence is IIGVVITMSYLVGDSLILILG. The Cytoplasmic segment spans residues 288-316; the sequence is NNKLKQTFVAILPCECGHPKPGSKRFFAS.

The protein belongs to the G-protein coupled receptor T2R family.

The protein resides in the membrane. Gustducin-coupled receptor implicated in the perception of bitter compounds in the oral cavity and the gastrointestinal tract. Signals through PLCB2 and the calcium-regulated cation channel TRPM5. The sequence is that of Taste receptor type 2 member 3 from Rattus norvegicus (Rat).